Reading from the N-terminus, the 139-residue chain is D-ribose pyranase (139 aa).

The Proton donor role is filled by H20. Substrate-binding positions include D28, H106, and 128 to 130 (YAN).

The protein belongs to the RbsD / FucU family. RbsD subfamily. In terms of assembly, homodecamer.

The protein localises to the cytoplasm. It catalyses the reaction beta-D-ribopyranose = beta-D-ribofuranose. It functions in the pathway carbohydrate metabolism; D-ribose degradation; D-ribose 5-phosphate from beta-D-ribopyranose: step 1/2. Its function is as follows. Catalyzes the interconversion of beta-pyran and beta-furan forms of D-ribose. The polypeptide is D-ribose pyranase (Vibrio campbellii (strain ATCC BAA-1116)).